The following is a 444-amino-acid chain: D(2) dopamine receptor (444 aa).

Residues 1–37 are Extracellular-facing; it reads MDPLNLSWYDDDLERQNWSRPFNGSEGKPDRPHYNYY. N-linked (GlcNAc...) asparagine glycans are attached at residues Asn-5, Asn-17, and Asn-23. Residues 38–60 traverse the membrane as a helical segment; sequence AMLLTLLIFIIVFGNVLVCMAVS. At 61 to 70 the chain is on the cytoplasmic side; it reads REKALQTTTN. Residues 71-93 traverse the membrane as a helical segment; that stretch reads YLIVSLAVADLLVATLVMPWVVY. At 94-108 the chain is on the extracellular side; sequence LEVVGEWKFSRIHCD. A disulfide bridge links Cys-107 with Cys-182. A helical transmembrane segment spans residues 109-130; it reads IFVTLDVMMCTASILNLCAISI. Topologically, residues 131–151 are cytoplasmic; sequence DRYTAVAMPMLYNTRYSSKRR. The chain crosses the membrane as a helical span at residues 152 to 172; that stretch reads VTVMIAIVWVLSFTISCPLLF. The Extracellular segment spans residues 173–188; sequence GLNNTDQNECIIANPA. The chain crosses the membrane as a helical span at residues 189–213; the sequence is FVVYSSIVSFYVPFIVTLLVYIKIY. The tract at residues 211 to 374 is interaction with PPP1R9B; sequence KIYIVLRKRR…SQQKEKKATQ (164 aa). Residues 214–374 lie on the Cytoplasmic side of the membrane; sequence IVLRKRRKRV…SQQKEKKATQ (161 aa). Positions 282-329 are disordered; it reads EMLSSTSPPERTRYSPIPPSHHQLTLPDPSHHGLHSNPDSPAKPEKNG. Residues 375-396 form a helical membrane-spanning segment; sequence MLAIVLGVFIICWLPFFITHIL. Residues 397–410 are Extracellular-facing; the sequence is NIHCDCNIPPVLYS. Cys-400 and Cys-402 are joined by a disulfide. A helical transmembrane segment spans residues 411–432; it reads AFTWLGYVNSAVNPIIYTTFNI. The Cytoplasmic segment spans residues 433–444; it reads EFRKAFMKILHC. Cys-444 is lipidated: S-palmitoyl cysteine.

This sequence belongs to the G-protein coupled receptor 1 family. As to quaternary structure, forms homo- and heterooligomers with DRD4. The interaction with DRD4 may modulate agonist-induced downstream signaling. Interacts with CADPS and CADPS2. Interacts with GPRASP1, PPP1R9B and CLIC6. Interacts with ARRB2. Interacts with HTR2A. Interacts with DRD1. In terms of assembly, interacts with KCNA2. In terms of processing, palmitoylated. Palmitoylation which is required for proper localization to the plasma membrane and stability of the receptor could be carried on by ZDHHC4, ZDHHC3 and ZDHHC8. As to expression, expressed in retinal hyaloid vessels at postnatal day 6. In terms of tissue distribution, expressed in the pituitary gland, stratum, brain stem and cortex. Expressed in the brain stem.

It localises to the cell membrane. Its subcellular location is the golgi apparatus membrane. Dopamine receptor whose activity is mediated by G proteins which inhibit adenylyl cyclase. Positively regulates postnatal regression of retinal hyaloid vessels via suppression of VEGFR2/KDR activity, downstream of OPN5. This Mus musculus (Mouse) protein is D(2) dopamine receptor (Drd2).